The sequence spans 377 residues: tRNA-specific 2-thiouridylase MnmA (377 aa).

Residues 17–24 (GMSGGVDS) and Met-43 contribute to the ATP site. The tract at residues 103–105 (NPD) is interaction with target base in tRNA. The active-site Nucleophile is Cys-108. An intrachain disulfide couples Cys-108 to Cys-204. Gly-132 lines the ATP pocket. The interval 154-156 (KDQ) is interaction with tRNA. The Cysteine persulfide intermediate role is filled by Cys-204. The interaction with tRNA stretch occupies residues 316-317 (RY).

Belongs to the MnmA/TRMU family.

The protein resides in the cytoplasm. It catalyses the reaction S-sulfanyl-L-cysteinyl-[protein] + uridine(34) in tRNA + AH2 + ATP = 2-thiouridine(34) in tRNA + L-cysteinyl-[protein] + A + AMP + diphosphate + H(+). Its function is as follows. Catalyzes the 2-thiolation of uridine at the wobble position (U34) of tRNA, leading to the formation of s(2)U34. The protein is tRNA-specific 2-thiouridylase MnmA of Pseudomonas fluorescens (strain ATCC BAA-477 / NRRL B-23932 / Pf-5).